Reading from the N-terminus, the 319-residue chain is Syntaxin ufe1 (319 aa).

Residues 1–297 (MTSRTNEFFG…IKAKSRSSRT (297 aa)) are Cytoplasmic-facing. The t-SNARE coiled-coil homology domain occupies 228 to 290 (LQEFEHTMER…SGGNQQLIKA (63 aa)). A helical; Anchor for type IV membrane protein transmembrane segment spans residues 298 to 315 (ARLLFCIFTVMGLLLLSL). Topologically, residues 316–319 (DRIV) are lumenal.

This sequence belongs to the syntaxin family. Component of a SNARE complex consisting of ufe1, use1, sec20 and sec22 or ykt6. Interacts with sad1.

Its subcellular location is the endoplasmic reticulum membrane. In terms of biological role, syntaxin required for targeting and fusion of Golgi-derived retrograde transport vesicles with the ER. This Schizosaccharomyces pombe (strain 972 / ATCC 24843) (Fission yeast) protein is Syntaxin ufe1 (ufe1).